The primary structure comprises 181 residues: ATP-dependent protease subunit HslV (181 aa).

The active site involves T7. Residues G166, C169, and T172 each contribute to the Na(+) site.

Belongs to the peptidase T1B family. HslV subfamily. A double ring-shaped homohexamer of HslV is capped on each side by a ring-shaped HslU homohexamer. The assembly of the HslU/HslV complex is dependent on binding of ATP.

The protein localises to the cytoplasm. The catalysed reaction is ATP-dependent cleavage of peptide bonds with broad specificity.. Its activity is regulated as follows. Allosterically activated by HslU binding. Its function is as follows. Protease subunit of a proteasome-like degradation complex believed to be a general protein degrading machinery. The polypeptide is ATP-dependent protease subunit HslV (Acidovorax ebreus (strain TPSY) (Diaphorobacter sp. (strain TPSY))).